Consider the following 335-residue polypeptide: Fructose-1,6-bisphosphatase class 1 (335 aa).

Mg(2+) contacts are provided by glutamate 92, aspartate 115, leucine 117, and aspartate 118. Substrate is bound by residues 118-121 (DGSS), asparagine 211, tyrosine 244, 262-264 (YLY), and lysine 274. Glutamate 280 lines the Mg(2+) pocket.

It belongs to the FBPase class 1 family. Homotetramer. Requires Mg(2+) as cofactor.

The protein resides in the cytoplasm. The catalysed reaction is beta-D-fructose 1,6-bisphosphate + H2O = beta-D-fructose 6-phosphate + phosphate. Its pathway is carbohydrate biosynthesis; gluconeogenesis. This Teredinibacter turnerae (strain ATCC 39867 / T7901) protein is Fructose-1,6-bisphosphatase class 1.